A 455-amino-acid chain; its full sequence is GTPase Der (455 aa).

2 EngA-type G domains span residues 3 to 167 and 184 to 359; these read FTIA…PEPA and IRVA…AVWN. GTP is bound by residues 9–16, 56–60, 119–122, 190–197, 237–241, and 302–305; these read GRPNVGKS, DTAGL, NKSE, GRPNAGKS, and NKWD. The region spanning 360-444 is the KH-like domain; it reads RRVATALLNR…PIRITLREKA (85 aa).

Belongs to the TRAFAC class TrmE-Era-EngA-EngB-Septin-like GTPase superfamily. EngA (Der) GTPase family. Associates with the 50S ribosomal subunit.

Functionally, GTPase that plays an essential role in the late steps of ribosome biogenesis. The polypeptide is GTPase Der (Nitrobacter winogradskyi (strain ATCC 25391 / DSM 10237 / CIP 104748 / NCIMB 11846 / Nb-255)).